A 356-amino-acid chain; its full sequence is tRNA pseudouridine synthase D (356 aa).

Residue aspartate 84 is the Nucleophile of the active site. One can recognise a TRUD domain in the interval 159-302 (GVPNYYGPQR…RRGARRPIRV (144 aa)).

The protein belongs to the pseudouridine synthase TruD family.

The catalysed reaction is uridine(13) in tRNA = pseudouridine(13) in tRNA. Functionally, responsible for synthesis of pseudouridine from uracil-13 in transfer RNAs. The protein is tRNA pseudouridine synthase D of Thermus thermophilus (strain ATCC BAA-163 / DSM 7039 / HB27).